A 117-amino-acid chain; its full sequence is MHEYSVVSSLIALCEEHAKKNQAHKIERVVVGIGERSAMDKSLFVSAFETFREESLVCKDAILDIVDEKVELECKDCSHVFKPNALDYGVCEKCHSKNVIITQGNEMRLLSLEMLAE.

Histidine 2 is a Ni(2+) binding site. Zn(2+)-binding residues include cysteine 74, cysteine 77, cysteine 91, and cysteine 94.

The protein belongs to the HypA/HybF family.

Involved in the maturation of [NiFe] hydrogenases. Required for nickel insertion into the metal center of the hydrogenase. This Helicobacter pylori (strain J99 / ATCC 700824) (Campylobacter pylori J99) protein is Hydrogenase maturation factor HypA.